The chain runs to 385 residues: Acetylornithine aminotransferase (385 aa).

Pyridoxal 5'-phosphate contacts are provided by residues 94 to 95 (GT) and phenylalanine 126. N(2)-acetyl-L-ornithine is bound at residue arginine 129. Pyridoxal 5'-phosphate is bound at residue 211 to 214 (DEVQ). Lysine 240 carries the N6-(pyridoxal phosphate)lysine modification. Threonine 267 is a N(2)-acetyl-L-ornithine binding site. Threonine 268 lines the pyridoxal 5'-phosphate pocket.

The protein belongs to the class-III pyridoxal-phosphate-dependent aminotransferase family. ArgD subfamily. In terms of assembly, homodimer. Pyridoxal 5'-phosphate serves as cofactor.

It is found in the cytoplasm. The catalysed reaction is N(2)-acetyl-L-ornithine + 2-oxoglutarate = N-acetyl-L-glutamate 5-semialdehyde + L-glutamate. It functions in the pathway amino-acid biosynthesis; L-arginine biosynthesis; N(2)-acetyl-L-ornithine from L-glutamate: step 4/4. The protein is Acetylornithine aminotransferase of Thermotoga maritima (strain ATCC 43589 / DSM 3109 / JCM 10099 / NBRC 100826 / MSB8).